The following is a 189-amino-acid chain: GTP cyclohydrolase 1 (189 aa).

Zn(2+) is bound by residues Cys78, His81, and Cys150.

Belongs to the GTP cyclohydrolase I family. As to quaternary structure, homomer.

The enzyme catalyses GTP + H2O = 7,8-dihydroneopterin 3'-triphosphate + formate + H(+). It functions in the pathway cofactor biosynthesis; 7,8-dihydroneopterin triphosphate biosynthesis; 7,8-dihydroneopterin triphosphate from GTP: step 1/1. The polypeptide is GTP cyclohydrolase 1 (Listeria monocytogenes serotype 4b (strain CLIP80459)).